Consider the following 202-residue polypeptide: uncharacterized protein (202 aa).

The 61-residue stretch at 14–74 folds into the HTH tetR-type domain; that stretch reads NAKTERILDV…AMADRYFQRC (61 aa).

This is an uncharacterized protein from Xanthobacter autotrophicus.